Consider the following 284-residue polypeptide: 4-diphosphocytidyl-2-C-methyl-D-erythritol kinase (284 aa).

The active site involves Lys-14. 98 to 108 (PMGGGIGGGSS) contributes to the ATP binding site. Asp-140 is a catalytic residue.

Belongs to the GHMP kinase family. IspE subfamily.

The catalysed reaction is 4-CDP-2-C-methyl-D-erythritol + ATP = 4-CDP-2-C-methyl-D-erythritol 2-phosphate + ADP + H(+). The protein operates within isoprenoid biosynthesis; isopentenyl diphosphate biosynthesis via DXP pathway; isopentenyl diphosphate from 1-deoxy-D-xylulose 5-phosphate: step 3/6. Its function is as follows. Catalyzes the phosphorylation of the position 2 hydroxy group of 4-diphosphocytidyl-2C-methyl-D-erythritol. The chain is 4-diphosphocytidyl-2-C-methyl-D-erythritol kinase from Shewanella woodyi (strain ATCC 51908 / MS32).